A 248-amino-acid chain; its full sequence is Pyridoxine 5'-phosphate synthase (248 aa).

Residue Asn7 participates in 3-amino-2-oxopropyl phosphate binding. 9–10 is a 1-deoxy-D-xylulose 5-phosphate binding site; that stretch reads DH. Residue Arg18 coordinates 3-amino-2-oxopropyl phosphate. His43 serves as the catalytic Proton acceptor. Positions 45 and 50 each coordinate 1-deoxy-D-xylulose 5-phosphate. The active-site Proton acceptor is Glu70. Thr100 contributes to the 1-deoxy-D-xylulose 5-phosphate binding site. His191 serves as the catalytic Proton donor. 3-amino-2-oxopropyl phosphate is bound by residues Gly192 and 213-214; that span reads GH.

The protein belongs to the PNP synthase family. As to quaternary structure, homooctamer; tetramer of dimers.

Its subcellular location is the cytoplasm. It carries out the reaction 3-amino-2-oxopropyl phosphate + 1-deoxy-D-xylulose 5-phosphate = pyridoxine 5'-phosphate + phosphate + 2 H2O + H(+). The protein operates within cofactor biosynthesis; pyridoxine 5'-phosphate biosynthesis; pyridoxine 5'-phosphate from D-erythrose 4-phosphate: step 5/5. Catalyzes the complicated ring closure reaction between the two acyclic compounds 1-deoxy-D-xylulose-5-phosphate (DXP) and 3-amino-2-oxopropyl phosphate (1-amino-acetone-3-phosphate or AAP) to form pyridoxine 5'-phosphate (PNP) and inorganic phosphate. The sequence is that of Pyridoxine 5'-phosphate synthase from Bordetella bronchiseptica (strain ATCC BAA-588 / NCTC 13252 / RB50) (Alcaligenes bronchisepticus).